Here is a 261-residue protein sequence, read N- to C-terminus: Putative hydro-lyase SSP0308 (261 aa).

This sequence belongs to the D-glutamate cyclase family.

The sequence is that of Putative hydro-lyase SSP0308 from Staphylococcus saprophyticus subsp. saprophyticus (strain ATCC 15305 / DSM 20229 / NCIMB 8711 / NCTC 7292 / S-41).